A 350-amino-acid polypeptide reads, in one-letter code: Biotin synthase 1 (350 aa).

A Radical SAM core domain is found at 71 to 296 (EEVEVEGIIS…KTILRFAGGR (226 aa)). 3 residues coordinate [4Fe-4S] cluster: Cys-86, Cys-90, and Cys-93. Positions 129, 221, and 291 each coordinate [2Fe-2S] cluster.

The protein belongs to the radical SAM superfamily. Biotin synthase family. In terms of assembly, homodimer. [4Fe-4S] cluster is required as a cofactor. [2Fe-2S] cluster serves as cofactor.

The catalysed reaction is (4R,5S)-dethiobiotin + (sulfur carrier)-SH + 2 reduced [2Fe-2S]-[ferredoxin] + 2 S-adenosyl-L-methionine = (sulfur carrier)-H + biotin + 2 5'-deoxyadenosine + 2 L-methionine + 2 oxidized [2Fe-2S]-[ferredoxin]. Its pathway is cofactor biosynthesis; biotin biosynthesis; biotin from 7,8-diaminononanoate: step 2/2. Its function is as follows. Catalyzes the conversion of dethiobiotin (DTB) to biotin by the insertion of a sulfur atom into dethiobiotin via a radical-based mechanism. The sequence is that of Biotin synthase 1 from Corynebacterium diphtheriae (strain ATCC 700971 / NCTC 13129 / Biotype gravis).